The primary structure comprises 88 residues: Small ribosomal subunit protein uS15 (88 aa).

This sequence belongs to the universal ribosomal protein uS15 family. Part of the 30S ribosomal subunit. Forms a bridge to the 50S subunit in the 70S ribosome, contacting the 23S rRNA.

Functionally, one of the primary rRNA binding proteins, it binds directly to 16S rRNA where it helps nucleate assembly of the platform of the 30S subunit by binding and bridging several RNA helices of the 16S rRNA. Its function is as follows. Forms an intersubunit bridge (bridge B4) with the 23S rRNA of the 50S subunit in the ribosome. This is Small ribosomal subunit protein uS15 from Geobacter sp. (strain M21).